A 507-amino-acid polypeptide reads, in one-letter code: Maturase K (507 aa).

Belongs to the intron maturase 2 family. MatK subfamily.

The protein resides in the plastid. The protein localises to the chloroplast. In terms of biological role, usually encoded in the trnK tRNA gene intron. Probably assists in splicing its own and other chloroplast group II introns. This chain is Maturase K, found in Calocedrus decurrens (California incense-cedar).